A 319-amino-acid polypeptide reads, in one-letter code: Inactive hydroxysteroid dehydrogenase-like protein 1 (319 aa).

A required for mitochondria translocation region spans residues 2–82 (AAVDSFQLLY…CGASEAIAKA (81 aa)). Residues 74–80 (GASEAIA), K99, and D125 each bind NADP(+).

Belongs to the short-chain dehydrogenases/reductases (SDR) family. 17-beta-HSD 3 subfamily.

The protein resides in the mitochondrion. This chain is Inactive hydroxysteroid dehydrogenase-like protein 1 (hsdl1), found in Danio rerio (Zebrafish).